Reading from the N-terminus, the 754-residue chain is Glutathione biosynthesis bifunctional protein GshAB (754 aa).

The interval 1–332 (MTLNQLLQKL…QGHALNEKIA (332 aa)) is glutamate--cysteine ligase. The ATP-grasp domain maps to 488–746 (KKILADAGFP…ITTKILDKLF (259 aa)). 515–573 (PLIKDKQIVVKPKSTNFGLGISIFQEPASLDNYQKALEIAFAEDTSVLVEEFIPGTEYR) is a binding site for ATP. Mg(2+)-binding residues include Asp-695, Glu-716, and Asn-718. 3 residues coordinate Mn(2+): Asp-695, Glu-716, and Asn-718.

The protein in the N-terminal section; belongs to the glutamate--cysteine ligase type 1 family. Type 2 subfamily. Monomer. Mg(2+) serves as cofactor. The cofactor is Mn(2+).

It carries out the reaction L-cysteine + L-glutamate + ATP = gamma-L-glutamyl-L-cysteine + ADP + phosphate + H(+). It catalyses the reaction gamma-L-glutamyl-L-cysteine + glycine + ATP = glutathione + ADP + phosphate + H(+). It functions in the pathway sulfur metabolism; glutathione biosynthesis; glutathione from L-cysteine and L-glutamate: step 1/2. The protein operates within sulfur metabolism; glutathione biosynthesis; glutathione from L-cysteine and L-glutamate: step 2/2. In terms of biological role, synthesizes glutathione from L-glutamate and L-cysteine via gamma-L-glutamyl-L-cysteine. This Streptococcus thermophilus (strain CNRZ 1066) protein is Glutathione biosynthesis bifunctional protein GshAB.